The sequence spans 943 residues: Isoleucine--tRNA ligase (943 aa).

Residues 59–69 carry the 'HIGH' region motif; the sequence is PYANGQIHLGH. Position 577 (Glu-577) interacts with L-isoleucyl-5'-AMP. Positions 618–622 match the 'KMSKS' region motif; that stretch reads KMSKS. Lys-621 provides a ligand contact to ATP. Residues Cys-906, Cys-909, Cys-926, and Cys-929 each contribute to the Zn(2+) site.

It belongs to the class-I aminoacyl-tRNA synthetase family. IleS type 1 subfamily. As to quaternary structure, monomer. Zn(2+) serves as cofactor.

It is found in the cytoplasm. It carries out the reaction tRNA(Ile) + L-isoleucine + ATP = L-isoleucyl-tRNA(Ile) + AMP + diphosphate. Functionally, catalyzes the attachment of isoleucine to tRNA(Ile). As IleRS can inadvertently accommodate and process structurally similar amino acids such as valine, to avoid such errors it has two additional distinct tRNA(Ile)-dependent editing activities. One activity is designated as 'pretransfer' editing and involves the hydrolysis of activated Val-AMP. The other activity is designated 'posttransfer' editing and involves deacylation of mischarged Val-tRNA(Ile). The sequence is that of Isoleucine--tRNA ligase from Xylella fastidiosa (strain M12).